The primary structure comprises 137 residues: MLSPKRTKFRKPHRGRFRGTATRGNKIVFGEYALQALEPVWLTSRQIEATRRSVTRFVKRTGKLWIRVFPDKSISCKPPETRMGAGKGAPDYWVAVIKPGHILFEIGGVSETLAYNAFKNASYKLPIKTKFISKEFQ.

It belongs to the universal ribosomal protein uL16 family. As to quaternary structure, part of the 50S ribosomal subunit.

The protein localises to the plastid. It is found in the chloroplast. The polypeptide is Large ribosomal subunit protein uL16c (Rhodomonas salina (Cryptomonas salina)).